The primary structure comprises 406 residues: Putative 12-oxophytodienoate reductase 12 (406 aa).

FMN contacts are provided by residues 41 to 43, Ala74, and Gln119; that span reads PLT. 188-191 is a substrate binding site; sequence HAAN. Residues Arg240, Gly317, and 338 to 339 each bind FMN; that span reads GR.

It belongs to the NADH:flavin oxidoreductase/NADH oxidase family. FMN serves as cofactor.

Its function is as follows. Putative oxophytodienoate reductase that may be involved in the biosynthesis or metabolism of oxylipin signaling molecules. This Oryza sativa subsp. japonica (Rice) protein is Putative 12-oxophytodienoate reductase 12 (OPR12).